A 217-amino-acid chain; its full sequence is Killer cell lectin-like receptor subfamily B member 1F (217 aa).

Over 1–45 (MDTSKVHGNVKPFRCPGYKQASSPSFSPDACRCPHWHHLALKSGC) the chain is Cytoplasmic. The LCK-binding motif signature appears at 31-34 (CRCP). The chain crosses the membrane as a helical; Signal-anchor for type II membrane protein span at residues 46–66 (AGLILLLLSLIGLSVLVRFLV). Residues 67–217 (QKPPIEKCSV…WICQKTLIHV (151 aa)) lie on the Extracellular side of the membrane. Asn81 is a glycosylation site (N-linked (GlcNAc...) asparagine). The 111-residue stretch at 101–211 (HWNKCLFVSQ…CSSDNHWICQ (111 aa)) folds into the C-type lectin domain. 2 disulfide bridges follow: Cys122–Cys210 and Cys189–Cys202.

In terms of tissue distribution, highly expressed in dendritic cells. Detectable in natural killer cells.

The protein resides in the membrane. Its function is as follows. Binds CLEC2I/Clr-g leading to activation of natural killer cells or costimulation of IL-2 production and proliferation of T-cells in response to antigen stimulation. May contribute to the formation of the immunological synapse between T-cells and antigen-presenting dendritic cells. This is Killer cell lectin-like receptor subfamily B member 1F (Klrb1f) from Mus musculus (Mouse).